Here is an 826-residue protein sequence, read N- to C-terminus: Arsenite oxidase subunit AioA (826 aa).

Residues Cys-22, Cys-25, and Cys-29 each coordinate [3Fe-4S] cluster. The substrate site is built by His-196, Glu-204, Arg-420, and His-424.

The protein belongs to the prokaryotic molybdopterin-containing oxidoreductase family. In terms of assembly, heterodimer consisting of a large and a small subunit. The cofactor is [3Fe-4S] cluster. Mo-bis(molybdopterin guanine dinucleotide) is required as a cofactor.

It carries out the reaction 2 oxidized [azurin] + arsenite + H2O = 2 reduced [azurin] + arsenate + 3 H(+). Its function is as follows. Involved in the detoxification of arsenic. Oxidizes As(III)O3(3-) (arsenite) to the somewhat less toxic As(V)O4(3-) (arsenate). The sequence is that of Arsenite oxidase subunit AioA (aioA) from Alcaligenes faecalis.